Reading from the N-terminus, the 198-residue chain is Chorion protein S19 (198 aa).

A signal peptide spans 1-16 (MNKFATLAVFISVCLA).

This sequence belongs to the chorion protein S19 family.

Its subcellular location is the secreted. In terms of biological role, chorion membrane (egg shell) protein; plays a role in protecting the egg from the environment. The protein is Chorion protein S19 (Cp19) of Drosophila virilis (Fruit fly).